The following is a 431-amino-acid chain: Chaperone SurA (431 aa).

The signal sequence occupies residues 1–20 (MKLTVVTFALLAFISFNTFA). 2 consecutive PpiC domains span residues 171 to 272 (QAEY…KIID) and 281 to 381 (VAEL…QLMD).

It localises to the periplasm. It carries out the reaction [protein]-peptidylproline (omega=180) = [protein]-peptidylproline (omega=0). In terms of biological role, chaperone involved in the correct folding and assembly of outer membrane proteins. Recognizes specific patterns of aromatic residues and the orientation of their side chains, which are found more frequently in integral outer membrane proteins. May act in both early periplasmic and late outer membrane-associated steps of protein maturation. This is Chaperone SurA from Pseudoalteromonas atlantica (strain T6c / ATCC BAA-1087).